The chain runs to 229 residues: Uridylate cyclase (229 aa).

The Guanylate cyclase domain maps to 47-178 (TVLYADLDGS…RAANYAAKLT (132 aa)). Tyr-50 serves as a coordination point for a ribonucleoside 5'-triphosphate. 2 residues coordinate Mn(2+): Asp-52 and Asp-96. Residue Arg-97 participates in a ribonucleoside 5'-triphosphate binding.

Belongs to the adenylyl cyclase class-4/guanylyl cyclase family. Pyrimidine cyclase subfamily. Homodimer. Requires Mn(2+) as cofactor.

It localises to the cytoplasm. It carries out the reaction UTP = 3',5'-cyclic UMP + diphosphate. Pycsar (pyrimidine cyclase system for antiphage resistance) provides immunity against bacteriophage. The pyrimidine cyclase (PycC) synthesizes cyclic nucleotides in response to infection; these serve as specific second messenger signals. The signals activate the adjacent effector, leading to bacterial cell death and abortive phage infection. A clade B Pycsar system. In terms of biological role, the pyrimidine cyclase gene of a two-gene Pycsar system, generates cyclic UMP (cUMP) from UTP, has little to no activity on ATP, CTP or GTP. Expression of this and adjacent effector BcPycTIR (AC A0A0J5WTU0) probably confers resistance to bacteriophage. The genes are probably only expressed in response to bacteriophage infection. This chain is Uridylate cyclase, found in Burkholderia cepacia (Pseudomonas cepacia).